A 688-amino-acid chain; its full sequence is Glycine--tRNA ligase beta subunit (688 aa).

Belongs to the class-II aminoacyl-tRNA synthetase family. Tetramer of two alpha and two beta subunits.

Its subcellular location is the cytoplasm. The enzyme catalyses tRNA(Gly) + glycine + ATP = glycyl-tRNA(Gly) + AMP + diphosphate. The polypeptide is Glycine--tRNA ligase beta subunit (Haemophilus influenzae (strain PittGG)).